The sequence spans 223 residues: Dephospho-CoA kinase (223 aa).

The 202-residue stretch at 3–204 (VFGLSGGAGS…AGRHRFRVAR (202 aa)) folds into the DPCK domain. 11-16 (GSGKST) is an ATP binding site.

Belongs to the CoaE family.

It localises to the cytoplasm. It catalyses the reaction 3'-dephospho-CoA + ATP = ADP + CoA + H(+). It participates in cofactor biosynthesis; coenzyme A biosynthesis; CoA from (R)-pantothenate: step 5/5. Functionally, catalyzes the phosphorylation of the 3'-hydroxyl group of dephosphocoenzyme A to form coenzyme A. The protein is Dephospho-CoA kinase of Anaplasma marginale (strain St. Maries).